The chain runs to 322 residues: Thioredoxin reductase (322 aa).

FAD-binding positions include 12 to 15 (SGPA), 34 to 42 (EGAVTAGGA), Asn51, and Val84. Cys136 and Cys139 are joined by a disulfide. His176, Arg182, Ile239, and Tyr259 together coordinate NADP(+). FAD contacts are provided by residues Asp279 and 286–289 (RQAI). Arg286 is an NADP(+) binding site.

It belongs to the class-II pyridine nucleotide-disulfide oxidoreductase family. As to quaternary structure, homodimer. FAD serves as cofactor.

The protein localises to the cytoplasm. It carries out the reaction [thioredoxin]-dithiol + NADP(+) = [thioredoxin]-disulfide + NADPH + H(+). In Streptomyces coelicolor (strain ATCC BAA-471 / A3(2) / M145), this protein is Thioredoxin reductase.